Reading from the N-terminus, the 290-residue chain is Shikimate dehydrogenase (NADP(+)) (290 aa).

Shikimate is bound by residues 19 to 21 and Ser65; that span reads SLS. Lys69 functions as the Proton acceptor in the catalytic mechanism. The shikimate site is built by Asn90 and Asp105. NADP(+) is bound by residues 129–133 and Leu231; that span reads GAGGA. Shikimate is bound at residue Tyr233. Position 254 (Gly254) interacts with NADP(+).

This sequence belongs to the shikimate dehydrogenase family. As to quaternary structure, homodimer.

The enzyme catalyses shikimate + NADP(+) = 3-dehydroshikimate + NADPH + H(+). The protein operates within metabolic intermediate biosynthesis; chorismate biosynthesis; chorismate from D-erythrose 4-phosphate and phosphoenolpyruvate: step 4/7. Involved in the biosynthesis of the chorismate, which leads to the biosynthesis of aromatic amino acids. Catalyzes the reversible NADPH linked reduction of 3-dehydroshikimate (DHSA) to yield shikimate (SA). The polypeptide is Shikimate dehydrogenase (NADP(+)) (Latilactobacillus sakei subsp. sakei (strain 23K) (Lactobacillus sakei subsp. sakei)).